Consider the following 319-residue polypeptide: ATP-dependent 6-phosphofructokinase (319 aa).

Residue G11 coordinates ATP. Residue 21-25 (RAVVR) coordinates ADP. Residues 72–73 (RY) and 102–105 (GDGS) each bind ATP. Mg(2+) is bound at residue D103. A substrate-binding site is contributed by 125-127 (TID). The active-site Proton acceptor is D127. An ADP-binding site is contributed by R154. Residues R162 and 169–171 (MGR) contribute to the substrate site. ADP is bound by residues 185–187 (GAE), R211, and 213–215 (KKH). Residues E222, R243, and 249–252 (HVQR) each bind substrate.

The protein belongs to the phosphofructokinase type A (PFKA) family. ATP-dependent PFK group I subfamily. Prokaryotic clade 'B1' sub-subfamily. As to quaternary structure, homotetramer. Requires Mg(2+) as cofactor.

The protein resides in the cytoplasm. It catalyses the reaction beta-D-fructose 6-phosphate + ATP = beta-D-fructose 1,6-bisphosphate + ADP + H(+). It functions in the pathway carbohydrate degradation; glycolysis; D-glyceraldehyde 3-phosphate and glycerone phosphate from D-glucose: step 3/4. With respect to regulation, allosterically activated by ADP and other diphosphonucleosides, and allosterically inhibited by phosphoenolpyruvate. Functionally, catalyzes the phosphorylation of D-fructose 6-phosphate to fructose 1,6-bisphosphate by ATP, the first committing step of glycolysis. This Listeria monocytogenes serotype 4b (strain CLIP80459) protein is ATP-dependent 6-phosphofructokinase.